The primary structure comprises 149 residues: Deoxyuridine 5'-triphosphate nucleotidohydrolase (149 aa).

Substrate is bound by residues 68-70 (RSG), N81, 85-87 (LID), and M95.

The protein belongs to the dUTPase family. Requires Mg(2+) as cofactor.

The enzyme catalyses dUTP + H2O = dUMP + diphosphate + H(+). Its pathway is pyrimidine metabolism; dUMP biosynthesis; dUMP from dCTP (dUTP route): step 2/2. Its function is as follows. This enzyme is involved in nucleotide metabolism: it produces dUMP, the immediate precursor of thymidine nucleotides and it decreases the intracellular concentration of dUTP so that uracil cannot be incorporated into DNA. This Polynucleobacter necessarius subsp. necessarius (strain STIR1) protein is Deoxyuridine 5'-triphosphate nucleotidohydrolase.